A 473-amino-acid chain; its full sequence is Flavin-dependent L-tryptophan oxidase RebO (473 aa).

The N-terminal stretch at 1–21 (MSRGHKKITVLGAGVAGLVAA) is a signal peptide. FAD-binding positions include 15–16 (VA), 35–36 (EG), R43, 61–64 (GAMR), E444, and 451–456 (AWIDGA).

The protein belongs to the flavin monoamine oxidase family. RebO subfamily. As to quaternary structure, homodimer. FAD serves as cofactor.

The catalysed reaction is 7-chloro-L-tryptophan + O2 = 3-(7-chloroindol-3-yl)-2-iminopropanoate + H2O2. It catalyses the reaction L-tryptophan + O2 = 2-iminio-3-(indol-3-yl)propanoate + H2O2. Its function is as follows. Involved in the biosynthesis of the indolocarbazole antitumor agent rebeccamycin. It generates the imine form of 7-chloroindole 3-pyruvate (7Cl-IPA) from 7-chloro-L-tryptophan (7Cl-Trp), with concomitant two-electron reduction of O(2) to H(2)O(2). The enzyme is also active with L-tryptophan as substrate. The polypeptide is Flavin-dependent L-tryptophan oxidase RebO (rebO) (Lentzea aerocolonigenes (Lechevalieria aerocolonigenes)).